We begin with the raw amino-acid sequence, 376 residues long: Cellular tumor antigen p53 (376 aa).

Residues 1-36 (MEGNGERDTMMVEPPDSQEFAELWLRNLIVRDNSLW) form a transcription activation (acidic) region. A DNA-binding region spans residues 77–268 (DYPGLLNFTL…KTEESNFKKQ (192 aa)). The segment covering 150–159 (RCPHHERSND) has biased composition (basic and acidic residues). A disordered region spans residues 150–171 (RCPHHERSNDSSDGPAPPGHLL). Cysteine 151, histidine 154, cysteine 214, and cysteine 218 together coordinate Zn(2+). The interval 249 to 256 (RVCACPGR) is interaction with DNA. Basic and acidic residues-rich tracts occupy residues 257-270 (DRKTEESNFKKQQE) and 282-294 (SMKDPPSHPEASK). A disordered region spans residues 257–306 (DRKTEESNFKKQQEPKTSGKTLTKRSMKDPPSHPEASKKSKNSSSDDEIY). A Bipartite nuclear localization signal motif is present at residues 280–297 (KRSMKDPPSHPEASKKSK). The oligomerization stretch occupies residues 303-334 (DEIYTLQVRGKERYEFLKKINDGLELSDVVPP). The short motif at 317-328 (EFLKKINDGLEL) is the Nuclear export signal element. A disordered region spans residues 342–376 (QKLLSKTCRKERDGAAGEPKRGKKRLVKEEKCDSD). The tract at residues 347–372 (KTCRKERDGAAGEPKRGKKRLVKEEK) is basic (repression of DNA-binding). Residues 349 to 361 (CRKERDGAAGEPK) show a composition bias toward basic and acidic residues.

This sequence belongs to the p53 family. In terms of assembly, binds DNA as a homotetramer. Zn(2+) serves as cofactor.

The protein localises to the cytoplasm. It is found in the nucleus. Functionally, multifunctional transcription factor that induces cell cycle arrest, DNA repair or apoptosis upon binding to its target DNA sequence. Acts as a tumor suppressor in many tumor types; induces growth arrest or apoptosis depending on the physiological circumstances and cell type. Negatively regulates cell division by controlling expression of a set of genes required for this process. One of the activated genes is an inhibitor of cyclin-dependent kinases. Apoptosis induction seems to be mediated either by stimulation of BAX and FAS antigen expression, or by repression of Bcl-2 expression. In Ictalurus punctatus (Channel catfish), this protein is Cellular tumor antigen p53 (tp53).